The sequence spans 512 residues: ATP synthase subunit alpha (512 aa).

Residue 169–176 (GDRQTGKT) participates in ATP binding.

The protein belongs to the ATPase alpha/beta chains family. As to quaternary structure, F-type ATPases have 2 components, CF(1) - the catalytic core - and CF(0) - the membrane proton channel. CF(1) has five subunits: alpha(3), beta(3), gamma(1), delta(1), epsilon(1). CF(0) has four main subunits: a(1), b(1), b'(1) and c(9-12).

Its subcellular location is the cell inner membrane. The enzyme catalyses ATP + H2O + 4 H(+)(in) = ADP + phosphate + 5 H(+)(out). Functionally, produces ATP from ADP in the presence of a proton gradient across the membrane. The alpha chain is a regulatory subunit. This chain is ATP synthase subunit alpha, found in Cereibacter sphaeroides (strain ATCC 17025 / ATH 2.4.3) (Rhodobacter sphaeroides).